A 418-amino-acid polypeptide reads, in one-letter code: Gamma-glutamyl phosphate reductase (418 aa).

It belongs to the gamma-glutamyl phosphate reductase family.

The protein resides in the cytoplasm. The enzyme catalyses L-glutamate 5-semialdehyde + phosphate + NADP(+) = L-glutamyl 5-phosphate + NADPH + H(+). It participates in amino-acid biosynthesis; L-proline biosynthesis; L-glutamate 5-semialdehyde from L-glutamate: step 2/2. Catalyzes the NADPH-dependent reduction of L-glutamate 5-phosphate into L-glutamate 5-semialdehyde and phosphate. The product spontaneously undergoes cyclization to form 1-pyrroline-5-carboxylate. This Lacticaseibacillus paracasei (strain ATCC 334 / BCRC 17002 / CCUG 31169 / CIP 107868 / KCTC 3260 / NRRL B-441) (Lactobacillus paracasei) protein is Gamma-glutamyl phosphate reductase.